The sequence spans 295 residues: Acetylglutamate kinase (295 aa).

Substrate contacts are provided by residues 66–67 (GG), arginine 88, and asparagine 193.

It belongs to the acetylglutamate kinase family. ArgB subfamily.

The protein localises to the cytoplasm. It catalyses the reaction N-acetyl-L-glutamate + ATP = N-acetyl-L-glutamyl 5-phosphate + ADP. It functions in the pathway amino-acid biosynthesis; L-arginine biosynthesis; N(2)-acetyl-L-ornithine from L-glutamate: step 2/4. In terms of biological role, catalyzes the ATP-dependent phosphorylation of N-acetyl-L-glutamate. This chain is Acetylglutamate kinase, found in Bradyrhizobium diazoefficiens (strain JCM 10833 / BCRC 13528 / IAM 13628 / NBRC 14792 / USDA 110).